Consider the following 199-residue polypeptide: NAD(P)H dehydrogenase (quinone) (199 aa).

Residues 4–190 form the Flavodoxin-like domain; sequence VLVLYYSTYG…AGARHQGELV (187 aa). FMN-binding positions include 10–15 and 78–80; these read STYGHL and TRF. Residue Y12 participates in NAD(+) binding. W98 lines the substrate pocket. FMN contacts are provided by residues 113–119 and H134; that span reads STATQHG.

Belongs to the WrbA family. FMN serves as cofactor.

The catalysed reaction is a quinone + NADH + H(+) = a quinol + NAD(+). It catalyses the reaction a quinone + NADPH + H(+) = a quinol + NADP(+). The polypeptide is NAD(P)H dehydrogenase (quinone) (Azorhizobium caulinodans (strain ATCC 43989 / DSM 5975 / JCM 20966 / LMG 6465 / NBRC 14845 / NCIMB 13405 / ORS 571)).